The chain runs to 342 residues: S-adenosylmethionine:tRNA ribosyltransferase-isomerase (342 aa).

The protein belongs to the QueA family. Monomer.

It localises to the cytoplasm. It carries out the reaction 7-aminomethyl-7-carbaguanosine(34) in tRNA + S-adenosyl-L-methionine = epoxyqueuosine(34) in tRNA + adenine + L-methionine + 2 H(+). It participates in tRNA modification; tRNA-queuosine biosynthesis. Its function is as follows. Transfers and isomerizes the ribose moiety from AdoMet to the 7-aminomethyl group of 7-deazaguanine (preQ1-tRNA) to give epoxyqueuosine (oQ-tRNA). This Streptococcus pyogenes serotype M1 protein is S-adenosylmethionine:tRNA ribosyltransferase-isomerase.